Consider the following 1274-residue polypeptide: Clustered mitochondria protein homolog (1274 aa).

Residues 1–53 are disordered; sequence MAQTNGELEHSKGMSSPAVRISQAQKSTKLTVDPESPEQVANGTHAEGEQPEE. 3 TPR repeats span residues 293–326, 510–543, and 628–661; these read SPSF…PNNP, DYGG…KKHP, and AKEA…ERVD. One can recognise a Clu domain in the interval 342 to 586; it reads DITRSQENYL…RVTPLDVMWQ (245 aa). Disordered stretches follow at residues 631-655 and 893-925; these read AAKK…EEAL and VSNG…ARAA. TPR repeat units lie at residues 998 to 1031, 1040 to 1073, 1082 to 1115, and 1124 to 1157; these read AKLY…TERT, ILSY…WKII, ITTM…CESL, and ATIL…FLQQ. The segment at 1197–1274 is disordered; that stretch reads INMTPRTLGT…KLRGSKKSSA (78 aa). Residues 1200–1217 show a composition bias toward polar residues; it reads TPRTLGTRVQPQVGQTAP.

Belongs to the CLU family. May associate with the eukaryotic translation initiation factor 3 (eIF-3) complex.

It is found in the cytoplasm. Its function is as follows. mRNA-binding protein involved in proper cytoplasmic distribution of mitochondria. The polypeptide is Clustered mitochondria protein homolog (Aspergillus terreus (strain NIH 2624 / FGSC A1156)).